Here is a 329-residue protein sequence, read N- to C-terminus: Telomeric repeat-binding factor 2-interacting protein 1 (329 aa).

Residues 63-86 (AVSTDYVVACVESQRRLPLDLYRH) enclose the BRCT domain. Residues 94–153 (ASPRGRLPFTEAEDAALLRAVRERSGAPRVSGTALWKELECTGLTRHSWQAMRDRYLRHL) enclose the Myb-like domain. A disordered region spans residues 179 to 206 (EFESSESGSDTSDTPDELPLQNGEGTFP). The Nuclear localization signal signature appears at 313-329 (AKFGAENVARRVAFRKS).

The protein belongs to the RAP1 family. As to quaternary structure, homodimer. Component of the shelterin complex (telosome). Interacts with terf2; the interaction is direct.

It is found in the nucleus. The protein resides in the chromosome. Its subcellular location is the telomere. Its function is as follows. Acts both as a regulator of telomere function and as a transcription regulator. Involved in the regulation of telomere length and protection as a component of the shelterin complex (telosome). Does not bind DNA directly: recruited to telomeric double-stranded 5'-TTAGGG-3' repeats via its interaction with terf2. Independently of its function in telomeres, also acts as a transcription regulator: recruited to extratelomeric 5'-TTAGGG-3' sites via its association with terf2 or other factors, and regulates gene expression. In Gallus gallus (Chicken), this protein is Telomeric repeat-binding factor 2-interacting protein 1 (TERF2IP).